The following is a 783-amino-acid chain: Tricorn protease-interacting factor F2 (783 aa).

Residues glutamate 107 and 236-240 (GAMEN) each bind substrate. Histidine 271 lines the Zn(2+) pocket. Residue glutamate 272 is the Proton acceptor of the active site. Histidine 275 and glutamate 294 together coordinate Zn(2+).

Belongs to the peptidase M1 family. As to quaternary structure, monomer. Part of the Tricorn proteolytic complex. The cofactor is Zn(2+).

It is found in the cytoplasm. Proteases F1, F2 and F3 degrade oligopeptides produced by Tricorn (themselves probably produced by the proteasome), yielding free amino acids. The protein is Tricorn protease-interacting factor F2 (trf2) of Thermoplasma volcanium (strain ATCC 51530 / DSM 4299 / JCM 9571 / NBRC 15438 / GSS1).